Consider the following 224-residue polypeptide: UPF0758 protein VIBHAR_00653 (224 aa).

The region spanning 102–224 (ALTSPEQTKL…SVSFAERGWI (123 aa)) is the MPN domain. Positions 173, 175, and 186 each coordinate Zn(2+). The short motif at 173–186 (HNHPSGVAEPSQAD) is the JAMM motif element.

Belongs to the UPF0758 family.

The chain is UPF0758 protein VIBHAR_00653 from Vibrio campbellii (strain ATCC BAA-1116).